We begin with the raw amino-acid sequence, 381 residues long: Cytochrome b (381 aa).

4 helical membrane-spanning segments follow: residues 32-52 (GGSLAGMMLASQMLTGILLAM), 76-98 (MILRYAHANGASLFFIVVYLHVL), 113-133 (VWISGVVILLVMIITAFIGYV), and 179-199 (FYSFHYTLPFILAGLSVFHIA). Residues His82 and His96 each coordinate heme b. Heme b contacts are provided by His183 and His197. His202 serves as a coordination point for a ubiquinone. Transmembrane regions (helical) follow at residues 225 to 245 (FGAKDLVGALFLALVFSILVF), 289 to 309 (AMGVLAIGLVFASLFAMPFIG), 318 to 338 (ITEWLYWTFLADVLLLTWLGG), and 345 to 365 (TSFVGQCCTAYLFFYLLVCQP).

This sequence belongs to the cytochrome b family. In terms of assembly, the main subunits of complex b-c1 are: cytochrome b, cytochrome c1 and the Rieske protein. Heme b is required as a cofactor.

It is found in the mitochondrion inner membrane. Functionally, component of the ubiquinol-cytochrome c reductase complex (complex III or cytochrome b-c1 complex) that is part of the mitochondrial respiratory chain. The b-c1 complex mediates electron transfer from ubiquinol to cytochrome c. Contributes to the generation of a proton gradient across the mitochondrial membrane that is then used for ATP synthesis. The chain is Cytochrome b (MT-CYB) from Chlamydomonas reinhardtii (Chlamydomonas smithii).